The sequence spans 1032 residues: Phosphoenolpyruvate carboxylase 4 (1032 aa).

H154 is an active-site residue. Residues 377-407 (PNLQKQNEQDFSESDWEKIDNGSRSGLTSRG) are disordered. A compositionally biased stretch (polar residues) spans 398-407 (GSRSGLTSRG). K699 is an active-site residue.

Belongs to the PEPCase type 1 family. Homotetramer. It depends on Mg(2+) as a cofactor. In terms of tissue distribution, expressed at low levels in flowers and siliques, and detectable in roots.

Its subcellular location is the cytoplasm. The catalysed reaction is oxaloacetate + phosphate = phosphoenolpyruvate + hydrogencarbonate. Through the carboxylation of phosphoenolpyruvate (PEP) it forms oxaloacetate, a four-carbon dicarboxylic acid source for the tricarboxylic acid cycle. In Arabidopsis thaliana (Mouse-ear cress), this protein is Phosphoenolpyruvate carboxylase 4 (PPC4).